Here is a 214-residue protein sequence, read N- to C-terminus: External core antigen (214 aa).

An N-terminal signal peptide occupies residues 1–19 (MQLFHLCLIISCTCPTVQA). An HBEAG region spans residues 25-27 (GWL). The segment at 165-214 (NAPILSTLPETTVVRRRDRGRSPRRRTPSPRRRRSQSPRRRRSQSRESQC) is disordered. Basic residues predominate over residues 178 to 207 (VRRRDRGRSPRRRTPSPRRRRSQSPRRRRS). The stretch at 186–192 (SPRRRTP) is one 1; half-length repeat. Residues 186–208 (SPRRRTPSPRRRRSQSPRRRRSQ) are 3 X 8 AA repeats of S-P-R-R-R-R-S-Q. Positions 186–214 (SPRRRTPSPRRRRSQSPRRRRSQSRESQC) are excised as a propeptide. 2 repeat units span residues 193 to 200 (SPRRRRSQ) and 201 to 208 (SPRRRRSQ).

This sequence belongs to the orthohepadnavirus precore antigen family. As to quaternary structure, homodimerizes. Phosphorylated. Post-translationally, cleaved by host furin.

It is found in the secreted. Its subcellular location is the host nucleus. Functionally, may regulate immune response to the intracellular capsid in acting as a T-cell tolerogen, by having an immunoregulatory effect which prevents destruction of infected cells by cytotoxic T-cells. This immune regulation may predispose to chronicity during perinatal infections and prevent severe liver injury during adult infections. In Homo sapiens (Human), this protein is External core antigen.